A 128-amino-acid polypeptide reads, in one-letter code: Holo-[acyl-carrier-protein] synthase (128 aa).

Mg(2+)-binding residues include Asp10 and Glu59.

The protein belongs to the P-Pant transferase superfamily. AcpS family. It depends on Mg(2+) as a cofactor.

The protein localises to the cytoplasm. It carries out the reaction apo-[ACP] + CoA = holo-[ACP] + adenosine 3',5'-bisphosphate + H(+). Its function is as follows. Transfers the 4'-phosphopantetheine moiety from coenzyme A to a Ser of acyl-carrier-protein. The polypeptide is Holo-[acyl-carrier-protein] synthase (Syntrophotalea carbinolica (strain DSM 2380 / NBRC 103641 / GraBd1) (Pelobacter carbinolicus)).